A 267-amino-acid polypeptide reads, in one-letter code: 2-keto-3-deoxy-L-rhamnonate aldolase (267 aa).

Residue His-49 is the Proton acceptor of the active site. Gln-151 contributes to the substrate binding site. Glu-153 is a Mg(2+) binding site. Residues Ala-178 and Asp-179 each contribute to the substrate site. Position 179 (Asp-179) interacts with Mg(2+).

This sequence belongs to the HpcH/HpaI aldolase family. KDR aldolase subfamily. Homohexamer. Mg(2+) serves as cofactor.

It carries out the reaction 2-dehydro-3-deoxy-L-rhamnonate = (S)-lactaldehyde + pyruvate. Its function is as follows. Catalyzes the reversible retro-aldol cleavage of 2-keto-3-deoxy-L-rhamnonate (KDR) to pyruvate and lactaldehyde. The polypeptide is 2-keto-3-deoxy-L-rhamnonate aldolase (Shigella sonnei (strain Ss046)).